An 88-amino-acid chain; its full sequence is uncharacterized protein (88 aa).

The tract at residues 1–31 (MIPRDPRSPAPDLSAINQPAGRAERRSGPAT) is disordered.

This is an uncharacterized protein from Escherichia coli.